The following is a 220-amino-acid chain: 7-cyano-7-deazaguanine synthase (220 aa).

10–20 (FSGGQDSTTCL) contacts ATP. Cys-186, Cys-195, Cys-198, and Cys-201 together coordinate Zn(2+).

It belongs to the QueC family. As to quaternary structure, homodimer. The cofactor is Zn(2+).

The catalysed reaction is 7-carboxy-7-deazaguanine + NH4(+) + ATP = 7-cyano-7-deazaguanine + ADP + phosphate + H2O + H(+). It participates in purine metabolism; 7-cyano-7-deazaguanine biosynthesis. Functionally, catalyzes the ATP-dependent conversion of 7-carboxy-7-deazaguanine (CDG) to 7-cyano-7-deazaguanine (preQ(0)). In Bacillus cereus (strain G9842), this protein is 7-cyano-7-deazaguanine synthase.